Reading from the N-terminus, the 88-residue chain is Large ribosomal subunit protein bL27 (88 aa).

The tract at residues 1 to 24 (MAHKKAGGSSRNGRDSAGQRRGVK) is disordered.

It belongs to the bacterial ribosomal protein bL27 family.

The chain is Large ribosomal subunit protein bL27 from Syntrophobacter fumaroxidans (strain DSM 10017 / MPOB).